The sequence spans 1193 residues: Probable DNA-directed RNA polymerase II subunit RPB2 homolog (1193 aa).

Aspartate 808 is a binding site for Mg(2+). Zn(2+) contacts are provided by cysteine 1137, cysteine 1140, cysteine 1155, and cysteine 1158. A C4-type zinc finger spans residues 1137–1158; the sequence is CVPCKSYFKVVKTQNGFFCSGC.

This sequence belongs to the RNA polymerase beta chain family.

It catalyses the reaction RNA(n) + a ribonucleoside 5'-triphosphate = RNA(n+1) + diphosphate. Its function is as follows. Component of the DNA-dependent RNA polymerase that catalyzes the transcription of DNA into RNA using the four ribonucleoside triphosphates as substrates. Second largest component of RNA polymerase II which synthesizes mRNA precursors and many functional non-coding RNAs. Proposed to contribute to the polymerase catalytic activity and forms the polymerase active center together with the largest subunit. The chain is Probable DNA-directed RNA polymerase II subunit RPB2 homolog from Invertebrate iridescent virus 6 (IIV-6).